The primary structure comprises 226 residues: UPF0758 protein SPT_1135 (226 aa).

One can recognise an MPN domain in the interval 103-225 (SILSSQKLAK…YFSYREKTDL (123 aa)). Zn(2+)-binding residues include histidine 174, histidine 176, and aspartate 187. Residues 174-187 (HNHPSGAVAPSQND) carry the JAMM motif motif.

Belongs to the UPF0758 family.

The chain is UPF0758 protein SPT_1135 from Streptococcus pneumoniae (strain Taiwan19F-14).